A 276-amino-acid polypeptide reads, in one-letter code: Radial spoke head protein 9 homolog (276 aa).

This sequence belongs to the flagellar radial spoke RSP9 family. In terms of assembly, component of the axonemal radial spoke 1 (RS1) and 2 (RS2) complexes, at least composed of spoke head proteins RSPH1, RSPH3, RSPH9 and the cilia-specific component RSPH4A or sperm-specific component RSPH6A, spoke stalk proteins RSPH14, DNAJB13, DYDC1, ROPN1L and NME5, and the RS1 complex-specific anchor protein IQUB. Interacts with IQUB. Interacts with RSPH3B. Interacts with RSPH4A. Interacts with RSPH6A. Interacts with CFAP61. Interacts with LRRC23.

Its subcellular location is the cytoplasm. It is found in the cytoskeleton. It localises to the cilium axoneme. The protein resides in the flagellum axoneme. The protein localises to the cell projection. Its subcellular location is the kinocilium. Functionally, functions as part of axonemal radial spoke complexes that play an important part in the motility of sperm and cilia. Essential for both the radial spoke head assembly and the central pair microtubule stability in ependymal motile cilia. Required for motility of olfactory and neural cilia and for the structural integrity of ciliary axonemes in both 9+0 and 9+2 motile cilia. The chain is Radial spoke head protein 9 homolog (RSPH9) from Bos taurus (Bovine).